A 238-amino-acid chain; its full sequence is Glycerol uptake facilitator protein 4 (238 aa).

A run of 2 helical transmembrane segments spans residues 2 to 22 (IHQL…GVGV) and 39 to 59 (IFAI…FGNV). Residues 62–64 (NPA) carry the NPA 1 motif. Transmembrane regions (helical) follow at residues 80 to 100 (FIPY…IVWI), 135 to 155 (FFVE…ISEV), and 158 to 178 (PGIV…GLGG). Residues 185-187 (NLA) carry the NPA 2 motif. A helical transmembrane segment spans residues 211 to 231 (YGIIVPGIAPFVGAACAALFM).

This sequence belongs to the MIP/aquaporin (TC 1.A.8) family.

It is found in the cell membrane. Its function is as follows. Transporter that facilitates the transmembrane diffusion of water, dihydroxyacetone, glycerol, urea, H(2)O(2) and D/L-lactic acid. Is involved in the cellular racemization of lactate and lactate metabolism, but has likely a more general physiological role. The transported molecule is indeed lactic acid and not the lactate anion, in agreement with the assumption that, with very few exceptions, MIPs (major intrinsic proteins) only facilitate the transport of uncharged solutes. In Lactiplantibacillus plantarum (strain ATCC BAA-793 / NCIMB 8826 / WCFS1) (Lactobacillus plantarum), this protein is Glycerol uptake facilitator protein 4.